The chain runs to 398 residues: Flavin-containing monooxygenase ustF1 (398 aa).

A signal peptide spans 1–22 (MTVSQVRRVAVIGAGISGVVST). An FAD-binding site is contributed by 13-18 (GAGISG). N-linked (GlcNAc...) asparagine glycans are attached at residues asparagine 53, asparagine 57, asparagine 119, and asparagine 126. An NADP(+)-binding site is contributed by 194 to 199 (GGGVSS). Asparagine 236, asparagine 243, and asparagine 271 each carry an N-linked (GlcNAc...) asparagine glycan.

Belongs to the FMO family.

Its pathway is mycotoxin biosynthesis. Flavin-containing monooxygenase; part of the gene cluster that mediates the biosynthesis of the secondary metabolite ustiloxin B, an antimitotic tetrapeptide. First, ustA is processed by the subtilisin-like endoprotease Kex2 that is outside the ustiloxin B gene cluster, at the C-terminal side of Arg-Lys, after transfer to Golgi apparatus through the endoplasmic reticulum (ER). Cleavage by KEX2 generates 16 peptides YAIG-I to YAIG-XVI. To process the precursor peptide further, at least two peptidases are necessary to cleave the N-terminal and C-terminal sides of the Tyr-Ala-Ile-Gly core peptide which serves as backbone for the synthesis of ustiloxin B, through cyclization and modification of the tyrosine with a non-protein coding amino acid, norvaline. One of the two peptidases must be the serine peptidase ustP; and the other pepdidase is probably ustH. Macrocyclization of the core peptide derived from ustA requires the tyrosinase ustQ, as well as the homologous oxidases ustYa and ustYb, and leads to the production of the first cyclization product N-desmethylustiloxin F. For the formation of N-desmethylustiloxin F, three oxidation steps are required, hydroxylation at the benzylic position, hydroxylation at either the aromatic ring of Tyr or beta-position of Ile, and oxidative cyclization. UstQ may catalyze the oxidation of a phenol moiety, whereas the ustYa and ustYb are most likely responsible for the remaining two-step oxidations. N-desmethylustiloxin F is then methylated by ustM to yield ustiloxin F which in turn substrate of the cytochrome P450 monooxygenase ustC which catalyzes the formation of S-deoxyustiloxin H. The flavoprotein monooxygenases ustF1 and ustF2 then participate in the modification of the side chain of S-deoxyustiloxin H, leading to the synthesis of an oxime intermediate, via ustiloxin H. Finally, carboxylative dehydration performed by the cysteine desulfurase-like protein ustD yields ustiloxin B. This is Flavin-containing monooxygenase ustF1 from Aspergillus flavus (strain ATCC 200026 / FGSC A1120 / IAM 13836 / NRRL 3357 / JCM 12722 / SRRC 167).